The sequence spans 96 residues: Small ribosomal subunit protein bS6 (96 aa).

It belongs to the bacterial ribosomal protein bS6 family.

In terms of biological role, binds together with bS18 to 16S ribosomal RNA. The protein is Small ribosomal subunit protein bS6 of Streptococcus pneumoniae serotype 19F (strain G54).